A 712-amino-acid chain; its full sequence is MSQEKQVFSIDLAGRQLTVETGQLAKQANGAVLVRYGDTAVLSTATASKEAKNVDFFPLTVNYEERLYAVGKIPGGFIKREGRPSEKAILASRLIDRPIRPLFADGFRNEVQVVSIVMSVDQDCSSEMAAMLGSSLALSISDIPFEGPIAGATVGRINGEFVINPTVEQQEQSDIHLVVAGTKDAINMVEAGADQVPEETMLEAIMFGHDEIKRLIAFQEEIVQAVGKEKSEVKLYEVDADLNQAVREMAEKDMHSAIQVHEKHAREDAINEVKKRVIEHYEAQEADADTLGQVNEILYKIVKEEVRRLITVEKIRPDGRKGDEIRPLASEVGILSRTHGSGLFTRGQTQALSICTLGALGDVQILDGLGVEESKRFMHHYNFPSFSVGETRPMRGPGRREIGHGALGERALEPVIPSEKDFPYTVRLVSEVLESNGSTSQASICGSTLAMMDAGVPLKAPVAGIAMGLVKSGEHYTILTDIQGMEDHLGDMDFKVAGTAHGVTALQMDIKIDGLSREILEEALQQAKVGRMHILDHMLSVIAEPRTELSAYAPKIITMTINPDKIRDVIGPSGKQINKIIEETGVKIDIEQDGTVFISSINQEMNDKAKKIIEDIVREVQVGEIYEGKVKRVEKFGAFVELFSGKDGLVHISELALERVGKVEDVVKIGDVITVKVIEIDKQGRVNLSRKVLLKEEQEKEAAKEENKQEQQ.

The Mg(2+) site is built by D487 and D493. The KH domain maps to 554-613 (PKIITMTINPDKIRDVIGPSGKQINKIIEETGVKIDIEQDGTVFISSINQEMNDKAKKII). One can recognise an S1 motif domain in the interval 623–691 (GEIYEGKVKR…KQGRVNLSRK (69 aa)).

The protein belongs to the polyribonucleotide nucleotidyltransferase family. Mg(2+) is required as a cofactor.

It localises to the cytoplasm. The catalysed reaction is RNA(n+1) + phosphate = RNA(n) + a ribonucleoside 5'-diphosphate. Its function is as follows. Involved in mRNA degradation. Catalyzes the phosphorolysis of single-stranded polyribonucleotides processively in the 3'- to 5'-direction. This is Polyribonucleotide nucleotidyltransferase from Bacillus cereus (strain AH187).